A 626-amino-acid chain; its full sequence is Ankyrin repeat domain-containing protein 55 (626 aa).

9 ANK repeats span residues 25–54 (VDLA…SILE), 59–88 (EGCT…NINT), 92–124 (YGRT…IPDK), 125–156 (NGRL…EINH), 160–189 (EGMT…DPTL), 193–222 (DFKT…GPSI), 229–259 (SGKT…NLQA), 263–292 (DDRT…DSNL), and 296–325 (NEST…AEPA). Basic and acidic residues predominate over residues 354 to 372 (KEEQKAHQKDQSRARPKEE). 3 disordered regions span residues 354–377 (KEEQ…TSEV), 455–491 (HAGL…SLEN), and 522–626 (QPGH…HDEN). At Ser-474 the chain carries Phosphoserine. Positions 604 to 614 (QRGHDPPRAEE) are enriched in basic and acidic residues. Positions 616–626 (GGSSSPTHDEN) are enriched in polar residues.

The chain is Ankyrin repeat domain-containing protein 55 (Ankrd55) from Mus musculus (Mouse).